The chain runs to 345 residues: Guanine nucleotide-binding protein alpha-4 subunit (345 aa).

Residues 30–345 form the G-alpha domain; that stretch reads KDVKLLLLGP…TILSQALEHF (316 aa). Residues 33–46 are G1 motif; the sequence is KLLLLGPGESGKST. GTP is bound by residues 38-45, 171-177, 196-200, 265-268, and A320; these read GPGESGKS, LRCRVRT, DVGGQ, and NKKD. Mg(2+) contacts are provided by S45 and T177. Positions 169–177 are G2 motif; sequence DVLRCRVRT. Residues 192–201 form a G3 motif region; that stretch reads LKIVDVGGQR. Residues 261–268 are G4 motif; it reads VLFLNKKD. The G5 motif stretch occupies residues 318 to 323; that stretch reads TCAVDT.

This sequence belongs to the G-alpha family. As to quaternary structure, g proteins are composed of 3 units; alpha, beta and gamma. The alpha chain contains the guanine nucleotide binding site.

Functionally, guanine nucleotide-binding proteins (G proteins) are involved as modulators or transducers in various transmembrane signaling systems. G alpha-4 plays a role in morphogenesis of the multicellular structure. The chain is Guanine nucleotide-binding protein alpha-4 subunit (gpaD) from Dictyostelium discoideum (Social amoeba).